Here is a 190-residue protein sequence, read N- to C-terminus: Ganglioside GM2 activator (190 aa).

Residues 1–23 (MQSLMQAPVLIALGLLFAAPAQA) form the signal peptide. Cystine bridges form between Cys36–Cys180, Cys96–Cys103, Cys109–Cys135, and Cys122–Cys133. Asn60 is a glycosylation site (N-linked (GlcNAc...) asparagine).

The protein resides in the lysosome. It carries out the reaction cholesterol(in) = cholesterol(out). The large binding pocket can accommodate several single chain phospholipids and fatty acids, GM2A also exhibits some calcium-independent phospholipase activity. Binds gangliosides and stimulates ganglioside GM2 degradation. It stimulates only the breakdown of ganglioside GM2 and glycolipid GA2 by beta-hexosaminidase A. It extracts single GM2 molecules from membranes and presents them in soluble form to beta-hexosaminidase A for cleavage of N-acetyl-D-galactosamine and conversion to GM3. Has cholesterol transfer activity. The protein is Ganglioside GM2 activator (GM2A) of Macaca fascicularis (Crab-eating macaque).